The sequence spans 509 residues: ATP synthase subunit alpha (509 aa).

Residue 169-176 participates in ATP binding; it reads GDRQTGKT.

This sequence belongs to the ATPase alpha/beta chains family. As to quaternary structure, F-type ATPases have 2 components, CF(1) - the catalytic core - and CF(0) - the membrane proton channel. CF(1) has five subunits: alpha(3), beta(3), gamma(1), delta(1), epsilon(1). CF(0) has three main subunits: a(1), b(2) and c(9-12). The alpha and beta chains form an alternating ring which encloses part of the gamma chain. CF(1) is attached to CF(0) by a central stalk formed by the gamma and epsilon chains, while a peripheral stalk is formed by the delta and b chains.

It localises to the cell inner membrane. The catalysed reaction is ATP + H2O + 4 H(+)(in) = ADP + phosphate + 5 H(+)(out). Its function is as follows. Produces ATP from ADP in the presence of a proton gradient across the membrane. The alpha chain is a regulatory subunit. This is ATP synthase subunit alpha from Novosphingobium aromaticivorans (strain ATCC 700278 / DSM 12444 / CCUG 56034 / CIP 105152 / NBRC 16084 / F199).